A 119-amino-acid chain; its full sequence is Large ribosomal subunit protein uL22 (119 aa).

Belongs to the universal ribosomal protein uL22 family. In terms of assembly, part of the 50S ribosomal subunit.

Functionally, this protein binds specifically to 23S rRNA; its binding is stimulated by other ribosomal proteins, e.g. L4, L17, and L20. It is important during the early stages of 50S assembly. It makes multiple contacts with different domains of the 23S rRNA in the assembled 50S subunit and ribosome. The globular domain of the protein is located near the polypeptide exit tunnel on the outside of the subunit, while an extended beta-hairpin is found that lines the wall of the exit tunnel in the center of the 70S ribosome. This is Large ribosomal subunit protein uL22 from Chlorobium phaeobacteroides (strain DSM 266 / SMG 266 / 2430).